The sequence spans 448 residues: N-succinylarginine dihydrolase (448 aa).

Substrate-binding positions include 20 to 29 (AGLLFGNEAS), Asn111, and 138 to 139 (HR). The active site involves Glu175. Position 213 (Arg213) interacts with substrate. His249 is a catalytic residue. Substrate is bound by residues Asp251 and Asn360. Cys366 functions as the Nucleophile in the catalytic mechanism.

It belongs to the succinylarginine dihydrolase family. In terms of assembly, homodimer.

The enzyme catalyses N(2)-succinyl-L-arginine + 2 H2O + 2 H(+) = N(2)-succinyl-L-ornithine + 2 NH4(+) + CO2. It participates in amino-acid degradation; L-arginine degradation via AST pathway; L-glutamate and succinate from L-arginine: step 2/5. Functionally, catalyzes the hydrolysis of N(2)-succinylarginine into N(2)-succinylornithine, ammonia and CO(2). The sequence is that of N-succinylarginine dihydrolase from Shigella dysenteriae serotype 1 (strain Sd197).